A 301-amino-acid chain; its full sequence is Ornithine carbamoyltransferase (301 aa).

Residues arginine 100 and 127-130 contribute to the carbamoyl phosphate site; that span reads HPCQ. Residues asparagine 158, aspartate 221, and 225-226 each bind L-ornithine; that span reads SM. Carbamoyl phosphate-binding positions include 260 to 261 and arginine 288; that span reads CL.

Belongs to the aspartate/ornithine carbamoyltransferase superfamily. OTCase family.

It is found in the cytoplasm. The enzyme catalyses carbamoyl phosphate + L-ornithine = L-citrulline + phosphate + H(+). Its pathway is amino-acid biosynthesis; L-arginine biosynthesis; L-arginine from L-ornithine and carbamoyl phosphate: step 1/3. Functionally, reversibly catalyzes the transfer of the carbamoyl group from carbamoyl phosphate (CP) to the N(epsilon) atom of ornithine (ORN) to produce L-citrulline. The chain is Ornithine carbamoyltransferase from Shewanella oneidensis (strain ATCC 700550 / JCM 31522 / CIP 106686 / LMG 19005 / NCIMB 14063 / MR-1).